Here is a 150-residue protein sequence, read N- to C-terminus: 2-aminobenzenesulfonate 2,3-dioxygenase subunit beta (150 aa).

It belongs to the bacterial ring-hydroxylating dioxygenase beta subunit family. As to quaternary structure, heterotetramer with a alpha2beta2 structure.

The enzyme catalyses 2-aminobenzenesulfonate + NADH + O2 + 2 H(+) = 2,3-dihydroxybenzenesulfonate + NH4(+) + NAD(+). Inhibited by o-phenanthroline. Beta subunit of the oxygenase component of the 2-aminobenzenesulfonate 2,3-dioxygenase system (deaminating) (ABSDOS). Can use 2-aminobenzenesulfonate (ABS), benzenesulfonate (BS), 4-toluenesulfonate (TS), 2-nitrobenzenesulfonate, 3- and 4-aminobenzenesulfonates, 4-chloro- and 4-hydroxybenzenesulfonates and pyridine-3-sulfonate as substrates. No desulfonation of ABS to aminocatechol or aminophenol detected. This chain is 2-aminobenzenesulfonate 2,3-dioxygenase subunit beta, found in Alcaligenes sp.